The primary structure comprises 565 residues: Thiol:disulfide interchange protein DsbD (565 aa).

An N-terminal signal peptide occupies residues 1 to 19 (MAQRIFTLILLLCSTSVFA). 2 disulfide bridges follow: C122-C128 and C182-C304. 7 helical membrane passes run 163–183 (LPFS…TPCV), 208–228 (LLTF…GLVV), 243–263 (YVLI…FGLF), 296–316 (IAGL…LLYI), 323–343 (WLGG…LMLI), 357–377 (WMEQ…VFLL), and 384–404 (VWGL…AFIT). Residues 434 to 565 (WAFGATHTAQ…FSAHLRDRQP (132 aa)) form the Thioredoxin domain. A disulfide bridge connects residues C480 and C483.

The protein belongs to the thioredoxin family. DsbD subfamily.

Its subcellular location is the cell inner membrane. It carries out the reaction [protein]-dithiol + NAD(+) = [protein]-disulfide + NADH + H(+). The enzyme catalyses [protein]-dithiol + NADP(+) = [protein]-disulfide + NADPH + H(+). Its function is as follows. Required to facilitate the formation of correct disulfide bonds in some periplasmic proteins and for the assembly of the periplasmic c-type cytochromes. Acts by transferring electrons from cytoplasmic thioredoxin to the periplasm. This transfer involves a cascade of disulfide bond formation and reduction steps. This chain is Thiol:disulfide interchange protein DsbD, found in Shigella flexneri serotype 5b (strain 8401).